Here is a 251-residue protein sequence, read N- to C-terminus: Phosphoribosylaminoimidazole-succinocarboxamide synthase (251 aa).

It belongs to the SAICAR synthetase family.

It catalyses the reaction 5-amino-1-(5-phospho-D-ribosyl)imidazole-4-carboxylate + L-aspartate + ATP = (2S)-2-[5-amino-1-(5-phospho-beta-D-ribosyl)imidazole-4-carboxamido]succinate + ADP + phosphate + 2 H(+). Its pathway is purine metabolism; IMP biosynthesis via de novo pathway; 5-amino-1-(5-phospho-D-ribosyl)imidazole-4-carboxamide from 5-amino-1-(5-phospho-D-ribosyl)imidazole-4-carboxylate: step 1/2. The protein is Phosphoribosylaminoimidazole-succinocarboxamide synthase of Ruegeria pomeroyi (strain ATCC 700808 / DSM 15171 / DSS-3) (Silicibacter pomeroyi).